Here is a 568-residue protein sequence, read N- to C-terminus: CRISPR-associated exonuclease Cas4/endonuclease Cas1 fusion (568 aa).

The interval 1 to 209 (MSVVVTRYRG…KCSLAPVCLP (209 aa)) is CRISPR-associated exonuclease Cas4. [4Fe-4S] cluster is bound at residue Cys43. Positions 95 and 108 each coordinate Mn(2+). Residues Cys198, Cys201, and Cys207 each contribute to the [4Fe-4S] cluster site. Residues 232–568 (VLHVATPGTR…PGLFATFRLR (337 aa)) form a CRISPR-associated endonuclease Cas1 region. Glu390, His459, and Glu474 together coordinate Mn(2+).

In the N-terminal section; belongs to the CRISPR-associated exonuclease Cas4 family. It in the C-terminal section; belongs to the CRISPR-associated endonuclease Cas1 family. In terms of assembly, homodimer, forms a heterotetramer with a Cas2 homodimer. [4Fe-4S] cluster is required as a cofactor. Mg(2+) serves as cofactor. The cofactor is Mn(2+).

It carries out the reaction exonucleolytic cleavage in the 5'- to 3'-direction to yield nucleoside 3'-phosphates.. Its function is as follows. CRISPR (clustered regularly interspaced short palindromic repeat), is an adaptive immune system that provides protection against mobile genetic elements (viruses, transposable elements and conjugative plasmids). CRISPR clusters contain spacers, sequences complementary to antecedent mobile elements, and target invading nucleic acids. CRISPR clusters are transcribed and processed into CRISPR RNA (crRNA). The Cas4 region acts as a ssDNA exonuclease, while the Cas1 region acts as a dsDNA endonuclease. Involved in the integration of spacer DNA into the CRISPR cassette. In Myxococcus xanthus (strain DK1622), this protein is CRISPR-associated exonuclease Cas4/endonuclease Cas1 fusion (cas4-cas1).